The following is a 622-amino-acid chain: WD repeat-containing protein 46 (622 aa).

The tract at residues 1 to 135 (METAPKPGRG…KTQSKLEKAE (135 aa)) is disordered. Serine 41 bears the Phosphoserine mark. The segment covering 106–118 (EEARKFCRIDKSK) has biased composition (basic and acidic residues). 5 WD repeats span residues 192-233 (LRQF…CEIN), 234-271 (VMEA…LHCI), 314-353 (VRAG…PLAK), 356-395 (CHRG…QPLS), and 398-435 (TLPQ…SPPS). The tract at residues 547–622 (AAFQPKAKQK…AREGGLQVDP (76 aa)) is disordered. The span at 571–582 (VMDQEHRDKVRQ) shows a compositional bias: basic and acidic residues.

As to quaternary structure, part of the small subunit (SSU) processome, composed of more than 70 proteins and the RNA chaperone small nucleolar RNA (snoRNA) U3. Interacts with DDX21, NCL, NOP2 and EBNA1BP2.

The protein localises to the nucleus. Its subcellular location is the nucleolus. In terms of biological role, scaffold component of the nucleolar structure. Required for localization of DDX21 and NCL to the granular compartment of the nucleolus. Part of the small subunit (SSU) processome, first precursor of the small eukaryotic ribosomal subunit. During the assembly of the SSU processome in the nucleolus, many ribosome biogenesis factors, an RNA chaperone and ribosomal proteins associate with the nascent pre-rRNA and work in concert to generate RNA folding, modifications, rearrangements and cleavage as well as targeted degradation of pre-ribosomal RNA by the RNA exosome. The sequence is that of WD repeat-containing protein 46 (Wdr46) from Mus musculus (Mouse).